The sequence spans 517 residues: RNA-binding region-containing protein 3 (517 aa).

A disordered region spans residues 1–26 (MAAPEQPLAISRGCTSSSSLSPPRGD). At serine 21 the chain carries Phosphoserine. Residues 27-102 (RTLLVRHLPA…HTLVVEFAKE (76 aa)) form the RRM 1 domain. Disordered regions lie at residues 106 to 130 (VHSPCPTSGSEKKKRSDDPVEDDKE) and 213 to 254 (MPLH…DEDR). Serine 108 carries the post-translational modification Phosphoserine. Residues 115–130 (SEKKKRSDDPVEDDKE) are compositionally biased toward basic and acidic residues. Over residues 217 to 230 (APLPPTSPQPPEEP) the composition is skewed to pro residues. Over residues 231–252 (PLPEEDEELSSEESEYESTDDE) the composition is skewed to acidic residues. The 84-residue stretch at 420–503 (CRIYVKNLAK…KPMVVQFARS (84 aa)) folds into the RRM 2 domain.

As to quaternary structure, component of the U11/U12 snRNPs that are part of the U12-type spliceosome. Found in a complex with m(7)G-capped U12 snRNA. Interacts with PDCD7.

Its subcellular location is the nucleus. Its function is as follows. Participates in pre-mRNA U12-dependent splicing, performed by the minor spliceosome which removes U12-type introns. U12-type introns comprises less than 1% of all non-coding sequences. Binds to the 3'-stem-loop of m(7)G-capped U12 snRNA. The chain is RNA-binding region-containing protein 3 (RNPC3) from Pongo abelii (Sumatran orangutan).